Reading from the N-terminus, the 574-residue chain is Pyruvate kinase PKLR (574 aa).

Phosphoserine is present on residues S2, S19, S26, and S43. R116 is a binding site for substrate. The K(+) site is built by N118, S120, D156, and T157. 118-121 (NFSH) contacts ATP. Positions 163 and 250 each coordinate ATP. S292 is modified (phosphoserine). K313 is a binding site for substrate. E315 lines the Mn(2+) pocket. 3 residues coordinate substrate: G338, D339, and T371. Residue D339 coordinates Mn(2+). Residues 475–480 (TKTGRS), W525, R532, and 559–564 (RPGSGY) contribute to the beta-D-fructose 1,6-bisphosphate site.

Belongs to the pyruvate kinase family. Homotetramer. Mg(2+) is required as a cofactor. Mn(2+) serves as cofactor. It depends on K(+) as a cofactor.

The catalysed reaction is pyruvate + ATP = phosphoenolpyruvate + ADP + H(+). The protein operates within carbohydrate degradation; glycolysis; pyruvate from D-glyceraldehyde 3-phosphate: step 5/5. With respect to regulation, allosterically activated by fructose 1,6-bisphosphate. Functionally, pyruvate kinase that catalyzes the conversion of phosphoenolpyruvate to pyruvate with the synthesis of ATP, and which plays a key role in glycolysis. The sequence is that of Pyruvate kinase PKLR (Pklr) from Rattus norvegicus (Rat).